The sequence spans 304 residues: GTPase Era (304 aa).

The Era-type G domain occupies 11 to 179; it reads YCGFIAIVGR…QKIVRKSLRE (169 aa). The segment at 19 to 26 is G1; that stretch reads GRPNVGKS. GTP is bound at residue 19 to 26; it reads GRPNVGKS. The interval 45–49 is G2; that stretch reads QTTRH. The interval 66 to 69 is G3; the sequence is DTPG. Residues 66–70 and 128–131 contribute to the GTP site; these read DTPGL and NKVD. Residues 128 to 131 are G4; it reads NKVD. Residues 158-160 form a G5 region; it reads ISA. One can recognise a KH type-2 domain in the interval 210 to 287; that stretch reads TGEELPYSVT…HLELWVKVKA (78 aa).

It belongs to the TRAFAC class TrmE-Era-EngA-EngB-Septin-like GTPase superfamily. Era GTPase family. In terms of assembly, monomer.

The protein resides in the cytoplasm. It is found in the cell inner membrane. Functionally, an essential GTPase that binds both GDP and GTP, with rapid nucleotide exchange. Plays a role in 16S rRNA processing and 30S ribosomal subunit biogenesis and possibly also in cell cycle regulation and energy metabolism. This is GTPase Era from Actinobacillus pleuropneumoniae serotype 3 (strain JL03).